Here is a 314-residue protein sequence, read N- to C-terminus: Ornithine carbamoyltransferase (314 aa).

Carbamoyl phosphate-binding positions include 61-64 (STRT), Gln-88, Arg-112, and 139-142 (HPCQ). Residues Asn-170, Asp-234, and 238-239 (SM) each bind L-ornithine. Carbamoyl phosphate is bound by residues 274-275 (CL) and Arg-302.

The protein belongs to the aspartate/ornithine carbamoyltransferase superfamily. OTCase family.

Its subcellular location is the cytoplasm. The enzyme catalyses carbamoyl phosphate + L-ornithine = L-citrulline + phosphate + H(+). It participates in amino-acid biosynthesis; L-arginine biosynthesis; L-arginine from L-ornithine and carbamoyl phosphate: step 1/3. Functionally, reversibly catalyzes the transfer of the carbamoyl group from carbamoyl phosphate (CP) to the N(epsilon) atom of ornithine (ORN) to produce L-citrulline. The polypeptide is Ornithine carbamoyltransferase (Anoxybacillus flavithermus (strain DSM 21510 / WK1)).